The sequence spans 458 residues: Tyrosine phenol-lyase (458 aa).

The residue at position 258 (Lys-258) is an N6-(pyridoxal phosphate)lysine.

It belongs to the beta-eliminating lyase family. As to quaternary structure, homotetramer. It depends on pyridoxal 5'-phosphate as a cofactor.

It catalyses the reaction L-tyrosine + H2O = phenol + pyruvate + NH4(+). This is Tyrosine phenol-lyase (tpl) from Pasteurella multocida (strain Pm70).